Reading from the N-terminus, the 622-residue chain is Pyranose 2-oxidase (622 aa).

Positions 1 to 28 (MSASSSDPFHSFAKTSFTSKAAKRATAH) are cleaved as a signal peptide. The propeptide occupies 29-37 (SLPPLPGPG). His167 carries the post-translational modification Tele-8alpha-FAD histidine. Substrate contacts are provided by Gln449 and His451. His546 (proton acceptor) is an active-site residue. The active site involves Asn591.

This sequence belongs to the GMC oxidoreductase family. As to quaternary structure, homotetramer. The cofactor is FAD.

The protein localises to the periplasm. The catalysed reaction is D-glucose + O2 = 2-dehydro-D-glucose + H2O2. Catalyzes the oxidation of various aldopyranoses and disaccharides on carbon-2 to the corresponding 2-keto sugars concomitant with the reduction of O(2) to H(2)O(2). Plays an important role in lignin degradation of wood rot fungi by supplying the essential cosubstrate H(2)O(2) for the ligninolytic peroxidases, lignin peroxidase and manganese-dependent peroxidase. The preferred substrate is D-glucose which is converted to 2-dehydro-D-glucose, an intermediate of a secondary metabolic pathway leading to the antibiotic cortalcerone. Also acts on D-xylose, together with D-glucose the major sugars derived from wood, on L-sorbose, D-galactose and 1,5-anhydroglucitol, a diagnostic marker of diabetes mellitus. The polypeptide is Pyranose 2-oxidase (P2OX) (Trametes hirsuta (White-rot fungus)).